Here is a 1042-residue protein sequence, read N- to C-terminus: Isoleucine--tRNA ligase (1042 aa).

The 'HIGH' region signature appears at 48-58 (PFATGLPHFGH). The 'KMSKS' region signature appears at 594-598 (KMSKS). ATP is bound at residue Lys597.

Belongs to the class-I aminoacyl-tRNA synthetase family. IleS type 2 subfamily. In terms of assembly, monomer. Zn(2+) is required as a cofactor.

It localises to the cytoplasm. It carries out the reaction tRNA(Ile) + L-isoleucine + ATP = L-isoleucyl-tRNA(Ile) + AMP + diphosphate. Catalyzes the attachment of isoleucine to tRNA(Ile). As IleRS can inadvertently accommodate and process structurally similar amino acids such as valine, to avoid such errors it has two additional distinct tRNA(Ile)-dependent editing activities. One activity is designated as 'pretransfer' editing and involves the hydrolysis of activated Val-AMP. The other activity is designated 'posttransfer' editing and involves deacylation of mischarged Val-tRNA(Ile). In Borreliella burgdorferi (strain ZS7) (Borrelia burgdorferi), this protein is Isoleucine--tRNA ligase.